The primary structure comprises 164 residues: Phosphopantetheine adenylyltransferase (164 aa).

A substrate-binding site is contributed by serine 10. ATP contacts are provided by residues 10 to 11 (SF) and histidine 18. Lysine 42, leucine 74, and arginine 88 together coordinate substrate. ATP contacts are provided by residues 89 to 91 (GLR), glutamate 99, and 124 to 130 (YSFLSSS).

The protein belongs to the bacterial CoaD family. In terms of assembly, homohexamer. Mg(2+) serves as cofactor.

Its subcellular location is the cytoplasm. It carries out the reaction (R)-4'-phosphopantetheine + ATP + H(+) = 3'-dephospho-CoA + diphosphate. It participates in cofactor biosynthesis; coenzyme A biosynthesis; CoA from (R)-pantothenate: step 4/5. Functionally, reversibly transfers an adenylyl group from ATP to 4'-phosphopantetheine, yielding dephospho-CoA (dPCoA) and pyrophosphate. The chain is Phosphopantetheine adenylyltransferase from Bacillus licheniformis (strain ATCC 14580 / DSM 13 / JCM 2505 / CCUG 7422 / NBRC 12200 / NCIMB 9375 / NCTC 10341 / NRRL NRS-1264 / Gibson 46).